A 156-amino-acid polypeptide reads, in one-letter code: Arginine repressor (156 aa).

It belongs to the ArgR family.

It localises to the cytoplasm. The protein operates within amino-acid biosynthesis; L-arginine biosynthesis [regulation]. Regulates arginine biosynthesis genes. The sequence is that of Arginine repressor from Photorhabdus laumondii subsp. laumondii (strain DSM 15139 / CIP 105565 / TT01) (Photorhabdus luminescens subsp. laumondii).